The chain runs to 208 residues: Probable GTP-binding protein EngB (208 aa).

In terms of domain architecture, EngB-type G spans 22–195 (GLPEIALAGR…WHSIEEIFIA (174 aa)). GTP is bound by residues 30 to 37 (GRSNVGKS), 57 to 61 (GKTRT), 75 to 78 (DLPG), 142 to 145 (TKSD), and 174 to 176 (ISS). 2 residues coordinate Mg(2+): serine 37 and threonine 59.

The protein belongs to the TRAFAC class TrmE-Era-EngA-EngB-Septin-like GTPase superfamily. EngB GTPase family. It depends on Mg(2+) as a cofactor.

Functionally, necessary for normal cell division and for the maintenance of normal septation. This is Probable GTP-binding protein EngB from Alkaliphilus oremlandii (strain OhILAs) (Clostridium oremlandii (strain OhILAs)).